We begin with the raw amino-acid sequence, 492 residues long: Solute carrier family 2, facilitated glucose transporter member 1 (492 aa).

Met-1 is modified (N-acetylmethionine). The Cytoplasmic segment spans residues 1 to 11; it reads MEPSSKKVTGR. Residues 12 to 33 form a helical membrane-spanning segment; sequence LMLAVGGAVLGSLQFGYNTGVI. Residues 34 to 66 are Extracellular-facing; the sequence is NAPQKVIEEFYNQTWIHRYGERILPTTLTTLWS. Asn-45 carries an N-linked (GlcNAc...) asparagine glycan. The helical transmembrane segment at 67–87 threads the bilayer; that stretch reads LSVAIFSVGGMIGSFSVGLFV. Topologically, residues 88 to 90 are cytoplasmic; it reads NRF. Residues 91 to 112 traverse the membrane as a helical segment; it reads GRRNSMLMMNLLAFVSAVLMGF. Residues 113-120 lie on the Extracellular side of the membrane; the sequence is SKLAKSFE. Residues 121–144 traverse the membrane as a helical segment; sequence MLILGRFIIGVYCGLTTGFVPMYV. Over 145 to 155 the chain is Cytoplasmic; sequence GEVSPTALRGA. A helical transmembrane segment spans residues 156-176; sequence LGTLHQLGIVVGILIAQVFGL. Gln-161 is a binding site for D-glucose. The Extracellular segment spans residues 177–185; that stretch reads DSIMGNEDL. Residues 186 to 206 form a helical membrane-spanning segment; sequence WPLLLSVIFVPALLQCIVLPL. The Cytoplasmic segment spans residues 207-271; that stretch reads CPESPRFLLI…LFRSPAYRQP (65 aa). At Ser-226 the chain carries Phosphoserine. A helical transmembrane segment spans residues 272-293; sequence ILSAVVLQLSQQLSGINAVFYY. Residues 282 to 283 and Asn-288 contribute to the D-glucose site; that span reads QQ. Residues 294 to 306 lie on the Extracellular side of the membrane; sequence STSIFEKAGVQQP. A helical transmembrane segment spans residues 307–328; sequence VYATIGSGIVNTAFTVVSLFVV. Asn-317 provides a ligand contact to D-glucose. Residues 329-334 lie on the Cytoplasmic side of the membrane; that stretch reads ERAGRR. The chain crosses the membrane as a helical span at residues 335–355; sequence TLHLIGLAGMAACAVLMTIAL. The Extracellular segment spans residues 356 to 365; it reads ALLEQLPWMS. A helical membrane pass occupies residues 366 to 388; that stretch reads YLSIVAIFGFVAFFEVGPGPIPW. Residues Glu-380 and Trp-388 each coordinate D-glucose. The Cytoplasmic segment spans residues 389-401; it reads FIVAELFSQGPRP. The helical transmembrane segment at 402–422 threads the bilayer; that stretch reads AAVAVAGFSNWTSNFIVGMCF. The Extracellular segment spans residues 423–429; the sequence is QYVEQLC. Residues 430–450 form a helical membrane-spanning segment; it reads GPYVFIIFTVLLVLFFIFTYF. The Cytoplasmic segment spans residues 451 to 492; the sequence is KVPETKGRTFDEIASGFRQGGASQSDKTPEELFHPLGADSQV. A Phosphoserine modification is found at Ser-465. A disordered region spans residues 468 to 492; it reads RQGGASQSDKTPEELFHPLGADSQV. Thr-478 is modified (phosphothreonine). A Phosphoserine modification is found at Ser-490.

The protein belongs to the major facilitator superfamily. Sugar transporter (TC 2.A.1.1) family. Glucose transporter subfamily. As to quaternary structure, found in a complex with ADD2, DMTN and SLC2A1. Interacts (via C-terminus cytoplasmic region) with DMTN. Interacts with SNX27; the interaction is required when endocytosed to prevent degradation in lysosomes and promote recycling to the plasma membrane. Interacts with GIPC (via PDZ domain). Interacts with STOM. Interacts with SGTA (via Gln-rich region). Interacts with BSG. Interacts with SMIM43; the interaction may promote SLC2A1-mediated glucose transport to meet the energy needs of mesendoderm differentiation. Phosphorylation at Ser-226 by PKC promotes glucose uptake by increasing cell membrane localization.

The protein resides in the cell membrane. Its subcellular location is the photoreceptor inner segment. It carries out the reaction D-glucose(out) = D-glucose(in). With respect to regulation, the uptake of glucose is inhibited by cytochalasin B. Glucose uptake is increased in response to phorbol ester 12-O-tetradecanoylphorbol-13-acetate (TPA) treatment: TPA-induced glucose uptake requires phosphorylation at Ser-226. Facilitative glucose transporter, which is responsible for constitutive or basal glucose uptake. Has a very broad substrate specificity; can transport a wide range of aldoses including both pentoses and hexoses. Most important energy carrier of the brain: present at the blood-brain barrier and assures the energy-independent, facilitative transport of glucose into the brain. In association with BSG and NXNL1, promotes retinal cone survival by increasing glucose uptake into photoreceptors. Required for mesendoderm differentiation. The protein is Solute carrier family 2, facilitated glucose transporter member 1 of Oryctolagus cuniculus (Rabbit).